The sequence spans 311 residues: Putative dihydroorotate dehydrogenase A (fumarate) (311 aa).

Substrate contacts are provided by residues Lys-45, 69–73 (NSMGL), and Asn-128. 45 to 46 (KT) serves as a coordination point for FMN. Position 128 (Asn-128) interacts with FMN. Cys-131 functions as the Nucleophile in the catalytic mechanism. FMN is bound by residues Lys-165 and Val-193. 194 to 195 (NS) contributes to the substrate binding site. FMN contacts are provided by residues Gly-220, 248-249 (GG), and 270-271 (GT).

It belongs to the dihydroorotate dehydrogenase family. Type 1 subfamily. As to quaternary structure, homodimer. FMN is required as a cofactor.

It is found in the cytoplasm. The enzyme catalyses (S)-dihydroorotate + fumarate = orotate + succinate. Its pathway is pyrimidine metabolism; UMP biosynthesis via de novo pathway. Catalyzes the conversion of dihydroorotate to orotate with fumarate as the electron acceptor. The sequence is that of Putative dihydroorotate dehydrogenase A (fumarate) (pyrD) from Streptococcus pyogenes serotype M1.